Here is a 412-residue protein sequence, read N- to C-terminus: 1-deoxy-D-xylulose 5-phosphate reductoisomerase (412 aa).

The NADPH site is built by T10, G11, S12, I13, G36, K37, N38, and N130. K131 contributes to the 1-deoxy-D-xylulose 5-phosphate binding site. E132 contributes to the NADPH binding site. D156 contacts Mn(2+). S157, E158, S194, and H217 together coordinate 1-deoxy-D-xylulose 5-phosphate. Position 158 (E158) interacts with Mn(2+). G223 contributes to the NADPH binding site. 4 residues coordinate 1-deoxy-D-xylulose 5-phosphate: S230, N235, K236, and E239. E239 lines the Mn(2+) pocket.

The protein belongs to the DXR family. It depends on Mg(2+) as a cofactor. Mn(2+) is required as a cofactor.

The enzyme catalyses 2-C-methyl-D-erythritol 4-phosphate + NADP(+) = 1-deoxy-D-xylulose 5-phosphate + NADPH + H(+). It participates in isoprenoid biosynthesis; isopentenyl diphosphate biosynthesis via DXP pathway; isopentenyl diphosphate from 1-deoxy-D-xylulose 5-phosphate: step 1/6. Its function is as follows. Catalyzes the NADPH-dependent rearrangement and reduction of 1-deoxy-D-xylulose-5-phosphate (DXP) to 2-C-methyl-D-erythritol 4-phosphate (MEP). The protein is 1-deoxy-D-xylulose 5-phosphate reductoisomerase of Prochlorococcus marinus (strain NATL2A).